The chain runs to 394 residues: Imidazolonepropionase (394 aa).

Residues His61 and His63 each coordinate Fe(3+). His61 and His63 together coordinate Zn(2+). 4-imidazolone-5-propanoate contacts are provided by Arg70, Tyr133, and His164. Tyr133 contributes to the N-formimidoyl-L-glutamate binding site. Residue His225 coordinates Fe(3+). His225 provides a ligand contact to Zn(2+). Glu228 contacts 4-imidazolone-5-propanoate. A Fe(3+)-binding site is contributed by Asp299. Zn(2+) is bound at residue Asp299.

It belongs to the metallo-dependent hydrolases superfamily. HutI family. It depends on Zn(2+) as a cofactor. The cofactor is Fe(3+).

The protein localises to the cytoplasm. The catalysed reaction is 4-imidazolone-5-propanoate + H2O = N-formimidoyl-L-glutamate. The protein operates within amino-acid degradation; L-histidine degradation into L-glutamate; N-formimidoyl-L-glutamate from L-histidine: step 3/3. Catalyzes the hydrolytic cleavage of the carbon-nitrogen bond in imidazolone-5-propanoate to yield N-formimidoyl-L-glutamate. It is the third step in the universal histidine degradation pathway. This is Imidazolonepropionase from Picrophilus torridus (strain ATCC 700027 / DSM 9790 / JCM 10055 / NBRC 100828 / KAW 2/3).